The sequence spans 266 residues: Ribosomal RNA small subunit methyltransferase A (266 aa).

S-adenosyl-L-methionine contacts are provided by Asn13, Leu15, Gly40, Glu61, Asp86, and Asn110.

Belongs to the class I-like SAM-binding methyltransferase superfamily. rRNA adenine N(6)-methyltransferase family. RsmA subfamily.

The protein localises to the cytoplasm. It carries out the reaction adenosine(1518)/adenosine(1519) in 16S rRNA + 4 S-adenosyl-L-methionine = N(6)-dimethyladenosine(1518)/N(6)-dimethyladenosine(1519) in 16S rRNA + 4 S-adenosyl-L-homocysteine + 4 H(+). Functionally, specifically dimethylates two adjacent adenosines (A1518 and A1519) in the loop of a conserved hairpin near the 3'-end of 16S rRNA in the 30S particle. May play a critical role in biogenesis of 30S subunits. The sequence is that of Ribosomal RNA small subunit methyltransferase A from Hydrogenovibrio crunogenus (strain DSM 25203 / XCL-2) (Thiomicrospira crunogena).